The primary structure comprises 270 residues: Phospholysine phosphohistidine inorganic pyrophosphate phosphatase (270 aa).

Residues aspartate 17 and serine 19 each contribute to the Mg(2+) site. Residues 17-19 (DIS), 54-55 (TN), and lysine 189 each bind substrate. Aspartate 214 lines the Mg(2+) pocket.

It belongs to the HAD-like hydrolase superfamily. As to quaternary structure, homodimer. The cofactor is Mg(2+). As to expression, expressed in brain, and at lower levels in liver and kidney. Detected in thyroid (at protein level). Expressed in liver, kidney and moderately in brain.

It is found in the cytoplasm. The protein localises to the nucleus. The catalysed reaction is diphosphate + H2O = 2 phosphate + H(+). Functionally, phosphatase that hydrolyzes imidodiphosphate, 3-phosphohistidine and 6-phospholysine. Has broad substrate specificity and can also hydrolyze inorganic diphosphate, but with lower efficiency. The protein is Phospholysine phosphohistidine inorganic pyrophosphate phosphatase (LHPP) of Homo sapiens (Human).